The sequence spans 439 residues: Xylose isomerase (439 aa).

Catalysis depends on residues His-99 and Asp-102. 7 residues coordinate Mg(2+): Glu-230, Glu-266, His-269, Asp-294, Asp-305, Asp-307, and Asp-337.

It belongs to the xylose isomerase family. As to quaternary structure, homotetramer. Mg(2+) is required as a cofactor.

It localises to the cytoplasm. It catalyses the reaction alpha-D-xylose = alpha-D-xylulofuranose. The sequence is that of Xylose isomerase from Oceanobacillus iheyensis (strain DSM 14371 / CIP 107618 / JCM 11309 / KCTC 3954 / HTE831).